A 340-amino-acid chain; its full sequence is Solute carrier family 35 member G3 (340 aa).

Residues 11–31 form a disordered region; that stretch reads PDFTQPSPPSTPSSLTSNHHN. 9 helical membrane-spanning segments follow: residues 39–59, 69–89, 107–127, 160–180, 189–209, 223–243, 257–277, 283–303, and 307–327; these read TKGL…VGPF, LPSL…ALIL, FLHA…VQVV, AWCG…PGLG, LYTA…SLGL, TVAF…LFVL, CMVA…YAVT, LVCA…YYVL, and VAPS…IITA. Residues 51 to 176 form the EamA 1 domain; that stretch reads LSAGFVGPFS…STLGLIIIVG (126 aa). Residues 223 to 327 enclose the EamA 2 domain; sequence TVAFLFGLVG…VLGSIAIITA (105 aa).

Belongs to the SLC35G solute transporter family.

The protein resides in the membrane. In Rattus norvegicus (Rat), this protein is Solute carrier family 35 member G3 (Slc35g3).